The sequence spans 548 residues: MSAIYNLEPQPTASVIIHTTRGELSVELFAKQAPLTCRNFLQLALDGYYDNTIFHRLVPGFILQGGDPTGTGNGGESIYDGGAFSGDLDPWPMDQRMGKNAGPTGINFKDEFHSRLKFNRRGLLGSANESRPDTNSSQFFFTLDTAEELNGKNTMFGRIAGDTVYNLAKMGEGEVDEATERPTYPVKIERIEILINPFEDMKKRSRVAAVAPSKTTTTKDKKKKRKGGKQLLSFGDDEGDDEMPVLKKKKFDPRIVMEAPEEAPEQDEVRSKPTKAKKERASEKRVSIAQEEQDNSDQTTPREPPKEVRQKPAPPVKMEIEDESPEPEAPRKTALERANEEMAALKASMRRTIHSEEPVKEKKKSALESMIPETSMRGRKRRPGAANTSAADDAKALRMLKAFQSRLEKAPPEKENEPAARETTKDGEDAQAGDEEAELCDLHFIANCQSCTSWDKQEKDESDDEGWMSHALSFAADKLGKDLSNRRKAEEELVVIDPREKARTLKDEKKAARDARQGNSGRAWDQARDAARNAKMAQAASLAGRGAK.

One can recognise a PPIase cyclophilin-type domain in the interval 11 to 193; it reads PTASVIIHTT…YPVKIERIEI (183 aa). Disordered stretches follow at residues 204 to 436 and 504 to 548; these read RSRV…GDEE and TLKD…RGAK. Basic and acidic residues-rich tracts occupy residues 328–340, 353–366, 406–428, and 504–516; these read EAPRKTALERANE, IHSEEPVKEKKKSA, RLEKAPPEKENEPAARETTKDGE, and TLKDEKKAARDAR.

The protein belongs to the cyclophilin-type PPIase family. CWC27 subfamily. In terms of assembly, associated with the spliceosome.

The protein localises to the cytoplasm. It is found in the nucleus. It carries out the reaction [protein]-peptidylproline (omega=180) = [protein]-peptidylproline (omega=0). Functionally, PPIases accelerate the folding of proteins. It catalyzes the cis-trans isomerization of proline imidic peptide bonds in oligopeptides. Involved in pre-mRNA splicing. The sequence is that of Peptidyl-prolyl isomerase CWC27 (CWC27) from Gibberella zeae (strain ATCC MYA-4620 / CBS 123657 / FGSC 9075 / NRRL 31084 / PH-1) (Wheat head blight fungus).